Here is a 326-residue protein sequence, read N- to C-terminus: ATP-dependent 6-phosphofructokinase 2 (326 aa).

Residue G14 participates in ATP binding. 24–28 (RAVTR) contacts ADP. ATP contacts are provided by residues 75 to 76 (RC) and 105 to 108 (GDGS). D106 is a binding site for Mg(2+). 129 to 131 (TID) lines the substrate pocket. D131 (proton acceptor) is an active-site residue. R158 serves as a coordination point for ADP. Residues R166 and 173–175 (MGR) each bind substrate. ADP contacts are provided by residues 189 to 191 (GAE), K215, and 217 to 219 (KNS). Substrate-binding positions include E226, R250, and 256–259 (HLQR).

Belongs to the phosphofructokinase type A (PFKA) family. ATP-dependent PFK group I subfamily. Prokaryotic clade 'B1' sub-subfamily. As to quaternary structure, homotetramer. Requires Mg(2+) as cofactor.

It localises to the cytoplasm. It carries out the reaction beta-D-fructose 6-phosphate + ATP = beta-D-fructose 1,6-bisphosphate + ADP + H(+). Its pathway is carbohydrate degradation; glycolysis; D-glyceraldehyde 3-phosphate and glycerone phosphate from D-glucose: step 3/4. With respect to regulation, allosterically activated by ADP and other diphosphonucleosides, and allosterically inhibited by phosphoenolpyruvate. Catalyzes the phosphorylation of D-fructose 6-phosphate to fructose 1,6-bisphosphate by ATP, the first committing step of glycolysis. The chain is ATP-dependent 6-phosphofructokinase 2 from Bacteroides thetaiotaomicron (strain ATCC 29148 / DSM 2079 / JCM 5827 / CCUG 10774 / NCTC 10582 / VPI-5482 / E50).